Reading from the N-terminus, the 447-residue chain is Exodeoxyribonuclease 7 large subunit (447 aa).

It belongs to the XseA family. In terms of assembly, heterooligomer composed of large and small subunits.

It is found in the cytoplasm. The catalysed reaction is Exonucleolytic cleavage in either 5'- to 3'- or 3'- to 5'-direction to yield nucleoside 5'-phosphates.. Functionally, bidirectionally degrades single-stranded DNA into large acid-insoluble oligonucleotides, which are then degraded further into small acid-soluble oligonucleotides. This is Exodeoxyribonuclease 7 large subunit from Exiguobacterium sibiricum (strain DSM 17290 / CCUG 55495 / CIP 109462 / JCM 13490 / 255-15).